The chain runs to 390 residues: GTPase Obg (390 aa).

Residues 1–159 (MKFVDEATIL…RELMLELLLL (159 aa)) enclose the Obg domain. One can recognise an OBG-type G domain in the interval 160 to 333 (ADVGMLGLPN…LCWDVMNFLN (174 aa)). GTP-binding positions include 166–173 (GLPNAGKS), 191–195 (FTTLI), 213–216 (DIPG), 283–286 (NKID), and 314–316 (SAA). S173 and T193 together coordinate Mg(2+). A compositionally biased stretch (acidic residues) spans 363 to 384 (EVEAEAESEDDDDWDEEDDDGV). A disordered region spans residues 363-390 (EVEAEAESEDDDDWDEEDDDGVEFIYER).

Belongs to the TRAFAC class OBG-HflX-like GTPase superfamily. OBG GTPase family. Monomer. It depends on Mg(2+) as a cofactor.

It is found in the cytoplasm. An essential GTPase which binds GTP, GDP and possibly (p)ppGpp with moderate affinity, with high nucleotide exchange rates and a fairly low GTP hydrolysis rate. Plays a role in control of the cell cycle, stress response, ribosome biogenesis and in those bacteria that undergo differentiation, in morphogenesis control. The chain is GTPase Obg from Yersinia enterocolitica serotype O:8 / biotype 1B (strain NCTC 13174 / 8081).